A 193-amino-acid chain; its full sequence is MSPLSIVLLGFAMSTDAFAAAIGKGAAMRRPRWRDAVRAGLVFGCIEAITPVIGWMLGRAASDYLAAFDHWIAFGLLGALGAHMIVAGLRNESEVDEALRDTPKRYGLLALAATGFATSIDAMAVGVSLAFLDVHIGVVAAVVGLCTLSMVTAGVMLGRALGALIGKRAEILGGVILILIGSTILYEHLSGAA.

6 consecutive transmembrane segments (helical) span residues 3-23 (PLSI…AAIG), 37-57 (VRAG…GWML), 66-86 (AAFD…HMIV), 109-131 (LALA…SLAF), 146-166 (CTLS…ALIG), and 171-191 (ILGG…HLSG).

Belongs to the MntP (TC 9.B.29) family.

It is found in the cell inner membrane. Probably functions as a manganese efflux pump. The sequence is that of Putative manganese efflux pump MntP from Xanthomonas campestris pv. campestris (strain 8004).